The chain runs to 175 residues: ATP-dependent protease subunit HslV (175 aa).

Threonine 2 is a catalytic residue. Residues glycine 158, cysteine 161, and threonine 164 each coordinate Na(+).

This sequence belongs to the peptidase T1B family. HslV subfamily. As to quaternary structure, a double ring-shaped homohexamer of HslV is capped on each side by a ring-shaped HslU homohexamer. The assembly of the HslU/HslV complex is dependent on binding of ATP.

The protein localises to the cytoplasm. It catalyses the reaction ATP-dependent cleavage of peptide bonds with broad specificity.. With respect to regulation, allosterically activated by HslU binding. Functionally, protease subunit of a proteasome-like degradation complex believed to be a general protein degrading machinery. The protein is ATP-dependent protease subunit HslV of Haemophilus influenzae (strain ATCC 51907 / DSM 11121 / KW20 / Rd).